Reading from the N-terminus, the 884-residue chain is Chitin synthase E (884 aa).

Disordered stretches follow at residues 1–58 and 73–108; these read MGTP…PAVS and AVFA…SRAG. Composition is skewed to polar residues over residues 37–48 and 84–93; these read QSLLERNNSSHY and EAASENTFRA. A glycan (N-linked (GlcNAc...) asparagine) is linked at N44. Basic and acidic residues predominate over residues 95–105; it reads SNGDKASREGS. N301 carries N-linked (GlcNAc...) asparagine glycosylation. 7 helical membrane-spanning segments follow: residues 513-532, 556-576, 597-617, 635-655, 681-701, 708-728, and 812-832; these read WLNG…GRIY, IMTW…MDLV, IVNN…FIMA, YFSL…VGAF, GGIV…ASVL, IITS…ILMV, and VLVC…TATG. An N-linked (GlcNAc...) asparagine glycan is attached at N840. The helical transmembrane segment at 852-872 threads the bilayer; it reads VILWITAGLSLFRFIGSLWFL.

This sequence belongs to the chitin synthase family. Class III subfamily.

It is found in the cell membrane. The enzyme catalyses [(1-&gt;4)-N-acetyl-beta-D-glucosaminyl](n) + UDP-N-acetyl-alpha-D-glucosamine = [(1-&gt;4)-N-acetyl-beta-D-glucosaminyl](n+1) + UDP + H(+). Its function is as follows. Polymerizes chitin, a structural polymer of the cell wall and septum, by transferring the sugar moiety of UDP-GlcNAc to the non-reducing end of the growing chitin polymer. Plays an important role in septal growth or maintenance. Mediates colony spore formation. ChsE and chsD seem to play a functionally redundant role in lateral cell wall chitin synthesis. Involved in resistance to echinocandins. In Aspergillus niger (strain ATCC MYA-4892 / CBS 513.88 / FGSC A1513), this protein is Chitin synthase E.